Here is a 794-residue protein sequence, read N- to C-terminus: Mitochondrial intermediate peptidase (794 aa).

The transit peptide at 1 to 39 directs the protein to the mitochondrion; it reads MRVTSSRLLQGGSLVSRVLKRRLNNASRTKKGWFSTRTL. His-581 is a binding site for Zn(2+). Residue Glu-582 is part of the active site. 2 residues coordinate Zn(2+): His-585 and His-588.

It belongs to the peptidase M3 family. It depends on Zn(2+) as a cofactor.

Its subcellular location is the mitochondrion matrix. The enzyme catalyses Release of an N-terminal octapeptide as second stage of processing of some proteins imported into the mitochondrion.. In terms of biological role, cleaves proteins, imported into the mitochondrion, to their mature size. While most mitochondrial precursor proteins are processed to the mature form in one step by mitochondrial processing peptidase (MPP), the sequential cleavage by MIP of an octapeptide after initial processing by MPP is a required step for a subgroup of nuclear-encoded precursor proteins destined for the matrix or the inner membrane. The protein is Mitochondrial intermediate peptidase (OCT1) of Debaryomyces hansenii (strain ATCC 36239 / CBS 767 / BCRC 21394 / JCM 1990 / NBRC 0083 / IGC 2968) (Yeast).